Here is a 735-residue protein sequence, read N- to C-terminus: Funoran endo-beta-hydrolase (735 aa).

Residues 1–27 (MRVKSVYKKLSVSFILVMLSASQEVNS) form the signal peptide. Glu-200 serves as the catalytic Proton donor. Glu-322 functions as the Nucleophile in the catalytic mechanism.

This sequence belongs to the glycosyl hydrolase 86 family.

The catalysed reaction is Endohydrolysis of beta-(1-&gt;4)-linkages between beta-D-galactopyranose-6-sulfate and 3,6-anhydro-alpha-L-galactopyranose units in funoran.. The enzyme catalyses Hydrolysis of (1-&gt;4)-beta-D-galactosidic linkages in agarose, giving the tetramer as the predominant product.. Its activity is regulated as follows. Agarase activity is enhanced in the presence of NaCl. Agarase activity is significantly inhibited by Zn(2+) and slightly activated by several divalent ions including Mg(2+), Cd(2+) and Ca(2+). Its function is as follows. Endohydrolase that cleaves the beta-1,4 glycosidic bond between beta-D-galactopyranose-6-sulfate (G6S) and 3,6-anhydro-alpha-L-galactopyranose (LA) unit of funoran, a polysaccharide produced by red algae of the genus Gloiopeltis. It releases the disaccharide LA-G6S as the predominant end product. Also acts as a random endo-acting beta-agarase, which can hydrolyze agarose tetrasaccharides and hexasaccharides, and produces disaccharides as smallest products. Besides typical agarose oligosaccharides, it can use methylated galactoses. The enzyme exhibits higher catalytic efficiency towards agarose, but binds funoran preferentially. Has no activity on porphyran. The chain is Funoran endo-beta-hydrolase from Wenyingzhuangia aestuarii.